The sequence spans 449 residues: Gamma conglutin 1 (449 aa).

The signal sequence occupies residues 1-33 (MARNMAHILHILVISLSYSFLFVSSSSQDSQSL). One can recognise a Peptidase A1 domain in the interval 60–429 (HWANIHKRTP…DLERSRVGFN (370 aa)). 5 cysteine pairs are disulfide-bonded: Cys88/Cys178, Cys102/Cys115, Cys107/Cys133, Cys118/Cys128, and Cys350/Cys391. An N-linked (GlcNAc...) asparagine glycan is attached at Asn130.

It belongs to the peptidase A1 family. In terms of assembly, two-subunit monomeric unit made of alpha and beta subunits coupled by disulfide bonds (at pH 4.5 and under non-reducing conditions). Can also form oligomers including dimer, tetramer and cyclic hexamer (trimer of dimers) (at pH &gt; 5.5). Component of globulins complexes which accumulate in seeds. Interacts with flavonoids (e.g. apigenin glucosides) present in globulins complexes. Forms a static complex with vitexin. Undergoes very complex post-translational maturation; the proteolytic processing leading to the formation of two alpha and beta subunits is incomplete, leaving a certain amount of the protein in an uncut form. In terms of processing, glycosylated on alpha chain. In terms of tissue distribution, expressed in developing cotyledons and in the embryonic axis of germinating seeds. Accumulates in seeds, especially in the protein bodies of developing cotyledonary cells (at protein level). Also detected, at low levels, in plumules and radicles.

The protein localises to the secreted. Its subcellular location is the extracellular space. In terms of biological role, sulfur-rich seed storage protein that remains undegraded at germination. The polypeptide is Gamma conglutin 1 (Lupinus angustifolius (Narrow-leaved blue lupine)).